Reading from the N-terminus, the 155-residue chain is SsrA-binding protein (155 aa).

The protein belongs to the SmpB family.

It is found in the cytoplasm. Required for rescue of stalled ribosomes mediated by trans-translation. Binds to transfer-messenger RNA (tmRNA), required for stable association of tmRNA with ribosomes. tmRNA and SmpB together mimic tRNA shape, replacing the anticodon stem-loop with SmpB. tmRNA is encoded by the ssrA gene; the 2 termini fold to resemble tRNA(Ala) and it encodes a 'tag peptide', a short internal open reading frame. During trans-translation Ala-aminoacylated tmRNA acts like a tRNA, entering the A-site of stalled ribosomes, displacing the stalled mRNA. The ribosome then switches to translate the ORF on the tmRNA; the nascent peptide is terminated with the 'tag peptide' encoded by the tmRNA and targeted for degradation. The ribosome is freed to recommence translation, which seems to be the essential function of trans-translation. In Halothermothrix orenii (strain H 168 / OCM 544 / DSM 9562), this protein is SsrA-binding protein.